A 394-amino-acid chain; its full sequence is Probable pectate lyase 16 (394 aa).

The N-terminal stretch at 1 to 22 (MTLFTVSCLLVVLFLCHSLVHA) is a signal peptide. 3 residues coordinate Ca(2+): Asp192, Asp216, and Asp220. Arg272 is an active-site residue.

This sequence belongs to the polysaccharide lyase 1 family. The cofactor is Ca(2+).

It carries out the reaction Eliminative cleavage of (1-&gt;4)-alpha-D-galacturonan to give oligosaccharides with 4-deoxy-alpha-D-galact-4-enuronosyl groups at their non-reducing ends.. It participates in glycan metabolism; pectin degradation; 2-dehydro-3-deoxy-D-gluconate from pectin: step 2/5. This Arabidopsis thaliana (Mouse-ear cress) protein is Probable pectate lyase 16.